The following is a 980-amino-acid chain: Peroxisomal ATPase PEX6 (980 aa).

The residue at position 119 (R119) is an Omega-N-methylarginine. Residues 470–477 and 744–751 contribute to the ATP site; these read GPPGSGKT and GPPGTGKT.

The protein belongs to the AAA ATPase family. As to quaternary structure, interacts with PEX1; forming the PEX1-PEX6 AAA ATPase complex, which is composed of a heterohexamer formed by a trimer of PEX1-PEX6 dimers. Interacts with PEX26; interaction is direct and promotes recruitment to peroxisomal membranes. Interacts with ZFAND6.

The protein localises to the cytoplasm. The protein resides in the cytosol. Its subcellular location is the peroxisome membrane. It localises to the cell projection. It is found in the cilium. The protein localises to the photoreceptor outer segment. The enzyme catalyses ATP + H2O = ADP + phosphate + H(+). In terms of biological role, component of the PEX1-PEX6 AAA ATPase complex, a protein dislocase complex that mediates the ATP-dependent extraction of the PEX5 receptor from peroxisomal membranes, an essential step for PEX5 recycling. Specifically recognizes PEX5 monoubiquitinated at 'Cys-11', and pulls it out of the peroxisome lumen through the PEX2-PEX10-PEX12 retrotranslocation channel. Extraction by the PEX1-PEX6 AAA ATPase complex is accompanied by unfolding of the TPR repeats and release of bound cargo from PEX5. The polypeptide is Peroxisomal ATPase PEX6 (Cricetulus griseus (Chinese hamster)).